The following is a 95-amino-acid chain: LSM complex subunit LSM2 (95 aa).

In terms of domain architecture, Sm spans 2-76 (LFFSFFKTLV…VRYVYLNKNM (75 aa)).

This sequence belongs to the snRNP Sm proteins family. As to quaternary structure, component of the heptameric LSM1-LSM7 complex that forms a seven-membered ring structure with a donut shape. The LSm subunits are arranged in the order LSM1, LSM2, LSM3, LSM6, LSM5, LSM7 and LSM4. Except for LSM1, where a C-terminal helix crosses the ring structure to form additional interactions with LSM3 and LSM6, each subunit interacts only with its two neighboring subunits. The LSM1-LSM7 complex interacts with PAT1; within the complex PAT1 has direct interactions with LSM2 and LSM3. The LSM1-LSM7 complex interacts with XRN1. Component of the heptameric LSM2-LSM8 complex that forms a seven-membered ring structure with a donut shape; an RNA strand can pass through the hole in the center of the ring structure. The LSm subunits are arranged in the order LSM8, LSM2, LSM3, LSM6, LSM5, LSM7 and LSM4. Interacts with U6 snRNA SNR6 and chaperone PRP24; to promote formation of the U4/U6-U5 tri-snRNP (small nuclear ribonucleoprotein) complex, the LSM2-LSM8 complex preferentially binds U6 snRNA that has been modified to contain a non-cyclic 3' phosphate. Component of the spliceosome U4/U6-U5 tri-snRNP complex composed of the U4, U6 and U5 snRNAs and at least PRP3, PRP4, PRP6, PRP8, PRP18, PRP31, PRP38, SNU13, SNU23, SNU66, SNU114, SPP381, SMB1, SMD1, SMD2, SMD3, SMX2, SMX3, LSM2, LSM3, LSM4, LSM5, LSM6, LSM7, LSM8, BRR2 and DIB1. May be found in a complex comprising LSM2-LSM7 without LSM1 or LSM8; the complex associates with pre-P RNA and snoRNA SNR5.

Its subcellular location is the nucleus. The protein resides in the nucleolus. The protein localises to the cytoplasm. Component of LSm protein complexes, which are involved in RNA processing and may function in a chaperone-like manner. Component of the cytoplasmic LSM1-LSM7 complex which is involved in mRNA degradation by activating the decapping step. Together with PAT1, the LSM1-LSM7 complex binds to osmotic stress-activated mRNAs to attenuate the osmotic stress response, probably by limiting ribosome access to the mRNA and consequently translation. Component of the nuclear LSM2-LSM8 complex, which is involved in spliceosome assembly. The LSM2-LSM8 complex plays a role in the biogenesis of the spliceosomal U4/U6-U5 tri-snRNP complex by accelerating PRP24-mediated annealing of U4/U6 di-snRNA. The LSM2-LSM8 complex binds U6 snRNA terminating with a non-cyclic 3' phosphate group. LSM2-LSM8 is probably also involved in degradation of nuclear pre-mRNA by targeting them for decapping. LSM2-LSM8 could be involved in processing of pre-tRNAs, pre-rRNAs and U3 snoRNA, although involvement may be indirect. In a complex that probably contains LSM2-LSM7, but not LSM1 or LSM8, associates with the precursor of the RNA component of RNase P (pre-P RNA) and may be involved in maturing pre-P RNA; the complex also associates with snoRNA SNR5. This Saccharomyces cerevisiae (strain ATCC 204508 / S288c) (Baker's yeast) protein is LSM complex subunit LSM2 (LSM2).